A 245-amino-acid chain; its full sequence is tRNA pseudouridine synthase A (245 aa).

Aspartate 52 serves as the catalytic Nucleophile. Tyrosine 111 serves as a coordination point for substrate.

It belongs to the tRNA pseudouridine synthase TruA family. In terms of assembly, homodimer.

It carries out the reaction uridine(38/39/40) in tRNA = pseudouridine(38/39/40) in tRNA. In terms of biological role, formation of pseudouridine at positions 38, 39 and 40 in the anticodon stem and loop of transfer RNAs. The polypeptide is tRNA pseudouridine synthase A (Rickettsia felis (strain ATCC VR-1525 / URRWXCal2) (Rickettsia azadi)).